The chain runs to 274 residues: 2-dehydro-3-deoxyphosphooctonate aldolase (274 aa).

Belongs to the KdsA family.

Its subcellular location is the cytoplasm. It carries out the reaction D-arabinose 5-phosphate + phosphoenolpyruvate + H2O = 3-deoxy-alpha-D-manno-2-octulosonate-8-phosphate + phosphate. Its pathway is carbohydrate biosynthesis; 3-deoxy-D-manno-octulosonate biosynthesis; 3-deoxy-D-manno-octulosonate from D-ribulose 5-phosphate: step 2/3. It functions in the pathway bacterial outer membrane biogenesis; lipopolysaccharide biosynthesis. The sequence is that of 2-dehydro-3-deoxyphosphooctonate aldolase from Legionella pneumophila (strain Lens).